The following is a 1455-amino-acid chain: DNA-directed RNA polymerase subunit beta (1455 aa).

The protein belongs to the RNA polymerase beta chain family. The RNAP catalytic core consists of 2 alpha, 1 beta, 1 beta' and 1 omega subunit. When a sigma factor is associated with the core the holoenzyme is formed, which can initiate transcription.

It carries out the reaction RNA(n) + a ribonucleoside 5'-triphosphate = RNA(n+1) + diphosphate. In terms of biological role, DNA-dependent RNA polymerase catalyzes the transcription of DNA into RNA using the four ribonucleoside triphosphates as substrates. The chain is DNA-directed RNA polymerase subunit beta from Rhizorhabdus wittichii (strain DSM 6014 / CCUG 31198 / JCM 15750 / NBRC 105917 / EY 4224 / RW1) (Sphingomonas wittichii).